Consider the following 49-residue polypeptide: uncharacterized protein (49 aa).

A helical membrane pass occupies residues 22–42; that stretch reads AIVGISIMIIIAIGIYLIIEY.

It is found in the membrane. This is an uncharacterized protein from Methanocaldococcus jannaschii (strain ATCC 43067 / DSM 2661 / JAL-1 / JCM 10045 / NBRC 100440) (Methanococcus jannaschii).